Reading from the N-terminus, the 170-residue chain is MGVEQPLGDNIVTASLDGLVNWARKSSIWPMTFGLACCAIEMMATGAAKHDLDRFGIIFRASPRQSDCIIIAGTVTKKMLPVIKTVYEQMPEPKWVIAMGACACSGGVFDTYSVVQGVDEALPVDVYIPGCPPRPEALLYGLMKLQDKIGKERNSFGSAIGLGDRLEPAA.

Residues Cys-37, Cys-38, Cys-102, and Cys-131 each coordinate [4Fe-4S] cluster.

This sequence belongs to the complex I 20 kDa subunit family. In terms of assembly, NDH-1 is composed of 14 different subunits. Subunits NuoB, C, D, E, F, and G constitute the peripheral sector of the complex. [4Fe-4S] cluster serves as cofactor.

The protein resides in the cell inner membrane. The enzyme catalyses a quinone + NADH + 5 H(+)(in) = a quinol + NAD(+) + 4 H(+)(out). NDH-1 shuttles electrons from NADH, via FMN and iron-sulfur (Fe-S) centers, to quinones in the respiratory chain. The immediate electron acceptor for the enzyme in this species is believed to be ubiquinone. Couples the redox reaction to proton translocation (for every two electrons transferred, four hydrogen ions are translocated across the cytoplasmic membrane), and thus conserves the redox energy in a proton gradient. The protein is NADH-quinone oxidoreductase subunit B of Geotalea uraniireducens (strain Rf4) (Geobacter uraniireducens).